Reading from the N-terminus, the 150-residue chain is uncharacterized protein (150 aa).

This is an uncharacterized protein from Saccharomyces cerevisiae (strain ATCC 204508 / S288c) (Baker's yeast).